The following is a 435-amino-acid chain: UDP-N-acetylmuramate--L-alanine ligase (435 aa).

Position 108-114 (108-114) interacts with ATP; sequence GAHGKST.

This sequence belongs to the MurCDEF family.

It localises to the cytoplasm. The catalysed reaction is UDP-N-acetyl-alpha-D-muramate + L-alanine + ATP = UDP-N-acetyl-alpha-D-muramoyl-L-alanine + ADP + phosphate + H(+). It functions in the pathway cell wall biogenesis; peptidoglycan biosynthesis. Cell wall formation. The chain is UDP-N-acetylmuramate--L-alanine ligase from Campylobacter curvus (strain 525.92).